The primary structure comprises 592 residues: Proline--tRNA ligase (592 aa).

The protein belongs to the class-II aminoacyl-tRNA synthetase family. ProS type 1 subfamily. Homodimer.

Its subcellular location is the cytoplasm. It catalyses the reaction tRNA(Pro) + L-proline + ATP = L-prolyl-tRNA(Pro) + AMP + diphosphate. Its function is as follows. Catalyzes the attachment of proline to tRNA(Pro) in a two-step reaction: proline is first activated by ATP to form Pro-AMP and then transferred to the acceptor end of tRNA(Pro). As ProRS can inadvertently accommodate and process non-cognate amino acids such as alanine and cysteine, to avoid such errors it has two additional distinct editing activities against alanine. One activity is designated as 'pretransfer' editing and involves the tRNA(Pro)-independent hydrolysis of activated Ala-AMP. The other activity is designated 'posttransfer' editing and involves deacylation of mischarged Ala-tRNA(Pro). The misacylated Cys-tRNA(Pro) is not edited by ProRS. This Corynebacterium urealyticum (strain ATCC 43042 / DSM 7109) protein is Proline--tRNA ligase.